Reading from the N-terminus, the 540-residue chain is Putative BTB/POZ domain-containing protein R224 (540 aa).

Residues 16–88 (TDLELTLIDE…FYKNPIKYKN (73 aa)) enclose the BTB domain. The helical transmembrane segment at 356–376 (IFVSLLNDIIFVLSSINMYFI) threads the bilayer.

The protein belongs to the mimivirus BTB/WD family.

The protein resides in the membrane. This is Putative BTB/POZ domain-containing protein R224 from Acanthamoeba polyphaga (Amoeba).